The following is a 777-amino-acid chain: Santalene and bergamotene synthase, chloroplastic (777 aa).

A chloroplast-targeting transit peptide spans 1–36; sequence MIVGYRSTIITLSHPKLGNGKTISSNAIFQRSCRVR. Asp530 and Asp534 together coordinate Mg(2+). The DDXXD motif signature appears at 530-534; that stretch reads DDQFD.

The protein belongs to the terpene synthase family. Tpse subfamily. It depends on Mg(2+) as a cofactor. Mn(2+) is required as a cofactor.

It is found in the plastid. It localises to the chloroplast. The enzyme catalyses (2Z,6Z)-farnesyl diphosphate = (+)-alpha-santalene + diphosphate. The catalysed reaction is (2Z,6Z)-farnesyl diphosphate = (+)-endo-beta-bergamotene + diphosphate. It carries out the reaction (2Z,6Z)-farnesyl diphosphate = (1S,5S,6S)-alpha-bergamotene + diphosphate. Functionally, (2Z,6Z)-farnesyl diphosphate cyclizing enzyme. Produces (+)-alpha-santalene, (+)-endo-beta-bergamotene, (-)-endo-alpha-bergamotene, and at lower amounts, (-)exo-alpha-bergamotene and (+)-epi-beta-santalene. Not able to use geranyl diphosphate, E,E-farnesyl diphosphate or E,E,E-geranylgeranyl diphosphate as substrates, but able to use Neryl diphosphate to make the monoterpene terpineol. This Solanum habrochaites (Wild tomato) protein is Santalene and bergamotene synthase, chloroplastic (SBS).